The chain runs to 734 residues: ATP-dependent RNA helicase DDX50 (734 aa).

The interval 1–131 is disordered; it reads MPGKLLWGDI…KAEETLTREQ (131 aa). Positions 11–20 are enriched in acidic residues; the sequence is MELEAPLEES. 2 stretches are compositionally biased toward basic and acidic residues: residues 38–51 and 67–86; these read HSES…RENG and REKL…EFSP. Phosphoserine is present on residues serine 41, serine 81, serine 85, serine 113, serine 119, and serine 120. Residues 115 to 131 show a composition bias toward basic and acidic residues; that stretch reads NSHKSSDKAEETLTREQ. Lysine 122 is covalently cross-linked (Glycyl lysine isopeptide (Lys-Gly) (interchain with G-Cter in SUMO2)). The Q motif motif lies at 134-162; the sequence is GAFSNFSISEETIKLLKGRGVTYLFPIQV. The 180-residue stretch at 165–344 folds into the Helicase ATP-binding domain; that stretch reads FGPVYEGKDL…KKYMKSRYEQ (180 aa). Residue 178–185 participates in ATP binding; sequence ARTGTGKT. Threonine 244 is subject to Phosphothreonine. The DEVD box signature appears at 287–290; sequence DEVD. In terms of domain architecture, Helicase C-terminal spans 377–521; that stretch reads DVLQVYSGSE…GVPSTMDLVK (145 aa). A Phosphoserine modification is found at serine 515. A disordered region spans residues 664-734; that stretch reads YYDGNTSSNP…RSGGHKRNFD (71 aa). Residues 679 to 698 show a composition bias toward gly residues; that stretch reads WSGGRSGRSGRSGGRSGGRS. Residues 699–709 show a composition bias toward low complexity; it reads GRQSRQGSRSG. Basic residues predominate over residues 717–734; sequence RSGNRNRSRSGGHKRNFD.

It belongs to the DEAD box helicase family. DDX21/DDX50 subfamily. Interacts with C1QBP. Interacts with the ubiquitin ligase CTLH complex through GID4. Interacts with TICAM1.

The protein resides in the nucleus. Its subcellular location is the nucleolus. It is found in the cytoplasm. The enzyme catalyses ATP + H2O = ADP + phosphate + H(+). Functionally, ATP-dependent RNA helicase that may play a role in various aspects of RNA metabolism including pre-mRNA splicing or ribosomal RNA production. Also acts as a viral restriction factor and promotes the activation of the NF-kappa-B and IRF3 signaling pathways following its stimulation with viral RNA or infection with RNA and DNA viruses. For instance, decreases vaccinia virus, herpes simplex virus, Zika virus or dengue virus replication during the early stage of infection. Mechanistically, acts via the adapter TICAM1 and independently of the DDX1-DDX21-DHX36 helicase complex to induce the production of interferon-beta. The chain is ATP-dependent RNA helicase DDX50 (Ddx50) from Mus musculus (Mouse).